The sequence spans 219 residues: Probable nicotinate-nucleotide adenylyltransferase (219 aa).

It belongs to the NadD family.

It carries out the reaction nicotinate beta-D-ribonucleotide + ATP + H(+) = deamido-NAD(+) + diphosphate. It functions in the pathway cofactor biosynthesis; NAD(+) biosynthesis; deamido-NAD(+) from nicotinate D-ribonucleotide: step 1/1. Its function is as follows. Catalyzes the reversible adenylation of nicotinate mononucleotide (NaMN) to nicotinic acid adenine dinucleotide (NaAD). The protein is Probable nicotinate-nucleotide adenylyltransferase of Pseudomonas putida (strain W619).